A 204-amino-acid polypeptide reads, in one-letter code: 3-dehydroquinate dehydratase (204 aa).

3-dehydroquinate-binding positions include Ser9, 30 to 32 (ELR), and Arg57. Catalysis depends on His108, which acts as the Proton donor/acceptor. The active-site Schiff-base intermediate with substrate is Lys133. Arg167, Thr186, and Gln190 together coordinate 3-dehydroquinate.

Belongs to the type-I 3-dehydroquinase family. Homodimer.

It catalyses the reaction 3-dehydroquinate = 3-dehydroshikimate + H2O. It functions in the pathway metabolic intermediate biosynthesis; chorismate biosynthesis; chorismate from D-erythrose 4-phosphate and phosphoenolpyruvate: step 3/7. Involved in the third step of the chorismate pathway, which leads to the biosynthesis of aromatic amino acids. Catalyzes the cis-dehydration of 3-dehydroquinate (DHQ) and introduces the first double bond of the aromatic ring to yield 3-dehydroshikimate. This is 3-dehydroquinate dehydratase from Metallosphaera sedula (strain ATCC 51363 / DSM 5348 / JCM 9185 / NBRC 15509 / TH2).